Reading from the N-terminus, the 190-residue chain is MRFVVPFADRGDRKTRLSSCMDEETRERFALAMLRHVVRVLSKFGEVEVVTPDSSLSVPGTKVRRSDASLDELPLPDGEFGLVMSDLPLLSEEDVERALEGLKDADVVLCPSRRGGTSGVFVRKGVRFRPTFGGVSFPRNLRRAEKQGVEVAVVKSLGFFADVDEPEDLLDAALLGRREVAKIARSVVEV.

It belongs to the CofC family. In terms of assembly, homodimer.

It carries out the reaction (2S)-2-phospholactate + GTP + H(+) = (2S)-lactyl-2-diphospho-5'-guanosine + diphosphate. The protein operates within cofactor biosynthesis; coenzyme F420 biosynthesis. In terms of biological role, guanylyltransferase that catalyzes the activation of (2S)-2-phospholactate (2-PL) as (2S)-lactyl-2-diphospho-5'-guanosine, via the condensation of 2-PL with GTP. It is involved in the biosynthesis of coenzyme F420, a hydride carrier cofactor. The sequence is that of 2-phospho-L-lactate guanylyltransferase from Methanopyrus kandleri (strain AV19 / DSM 6324 / JCM 9639 / NBRC 100938).